We begin with the raw amino-acid sequence, 321 residues long: Lipoyl synthase (321 aa).

The [4Fe-4S] cluster site is built by C68, C73, C79, C94, C98, C101, and S308. A Radical SAM core domain is found at 80–297 (FNHGTATFMI…KAEALAMGFT (218 aa)).

This sequence belongs to the radical SAM superfamily. Lipoyl synthase family. Requires [4Fe-4S] cluster as cofactor.

The protein localises to the cytoplasm. It catalyses the reaction [[Fe-S] cluster scaffold protein carrying a second [4Fe-4S](2+) cluster] + N(6)-octanoyl-L-lysyl-[protein] + 2 oxidized [2Fe-2S]-[ferredoxin] + 2 S-adenosyl-L-methionine + 4 H(+) = [[Fe-S] cluster scaffold protein] + N(6)-[(R)-dihydrolipoyl]-L-lysyl-[protein] + 4 Fe(3+) + 2 hydrogen sulfide + 2 5'-deoxyadenosine + 2 L-methionine + 2 reduced [2Fe-2S]-[ferredoxin]. It functions in the pathway protein modification; protein lipoylation via endogenous pathway; protein N(6)-(lipoyl)lysine from octanoyl-[acyl-carrier-protein]: step 2/2. Functionally, catalyzes the radical-mediated insertion of two sulfur atoms into the C-6 and C-8 positions of the octanoyl moiety bound to the lipoyl domains of lipoate-dependent enzymes, thereby converting the octanoylated domains into lipoylated derivatives. The protein is Lipoyl synthase of Escherichia fergusonii (strain ATCC 35469 / DSM 13698 / CCUG 18766 / IAM 14443 / JCM 21226 / LMG 7866 / NBRC 102419 / NCTC 12128 / CDC 0568-73).